A 98-amino-acid chain; its full sequence is Small ribosomal subunit protein bS6 (98 aa).

The protein belongs to the bacterial ribosomal protein bS6 family.

Functionally, binds together with bS18 to 16S ribosomal RNA. The polypeptide is Small ribosomal subunit protein bS6 (Levilactobacillus brevis (strain ATCC 367 / BCRC 12310 / CIP 105137 / JCM 1170 / LMG 11437 / NCIMB 947 / NCTC 947) (Lactobacillus brevis)).